A 179-amino-acid chain; its full sequence is ATP synthase subunit delta (179 aa).

The protein belongs to the ATPase delta chain family. As to quaternary structure, F-type ATPases have 2 components, F(1) - the catalytic core - and F(0) - the membrane proton channel. F(1) has five subunits: alpha(3), beta(3), gamma(1), delta(1), epsilon(1). F(0) has three main subunits: a(1), b(2) and c(10-14). The alpha and beta chains form an alternating ring which encloses part of the gamma chain. F(1) is attached to F(0) by a central stalk formed by the gamma and epsilon chains, while a peripheral stalk is formed by the delta and b chains.

The protein resides in the cell inner membrane. Functionally, f(1)F(0) ATP synthase produces ATP from ADP in the presence of a proton or sodium gradient. F-type ATPases consist of two structural domains, F(1) containing the extramembraneous catalytic core and F(0) containing the membrane proton channel, linked together by a central stalk and a peripheral stalk. During catalysis, ATP synthesis in the catalytic domain of F(1) is coupled via a rotary mechanism of the central stalk subunits to proton translocation. Its function is as follows. This protein is part of the stalk that links CF(0) to CF(1). It either transmits conformational changes from CF(0) to CF(1) or is implicated in proton conduction. The protein is ATP synthase subunit delta of Burkholderia pseudomallei (strain 1710b).